Consider the following 579-residue polypeptide: Probable methyl-accepting chemotaxis protein BT9727_0355 (579 aa).

Residues 1–13 (MKKYWHKLSFLQK) are Cytoplasmic-facing. Residues 14-34 (NVLLTVLVILTLVGTMGALSF) form a helical membrane-spanning segment. The Extracellular segment spans residues 35–198 (NMFQNSMMSI…ASIVPSTKEK (164 aa)). Residues 199-219 (FIIQGLMFICISVLIATVIQF) traverse the membrane as a helical segment. Topologically, residues 220–579 (LIVRNALAPL…LQELIGEFKS (360 aa)) are cytoplasmic. Positions 223 to 274 (RNALAPLRDLREGLRRVGEGDLNIKLEERSDDIGIINSYFNNTIEKFKGIID) constitute an HAMP domain. Glu289 is modified (glutamate methyl ester (Glu)). The region spanning 293–529 (STKENSMAVQ…NIVRVVNELS (237 aa)) is the Methyl-accepting transducer domain. The residue at position 548 (Glu548) is a Glutamate methyl ester (Glu).

This sequence belongs to the methyl-accepting chemotaxis (MCP) protein family.

It is found in the cell membrane. Functionally, chemotactic-signal transducers respond to changes in the concentration of attractants and repellents in the environment, transduce a signal from the outside to the inside of the cell, and facilitate sensory adaptation through the variation of the level of methylation. In Bacillus thuringiensis subsp. konkukian (strain 97-27), this protein is Probable methyl-accepting chemotaxis protein BT9727_0355.